A 283-amino-acid polypeptide reads, in one-letter code: Polyamine aminopropyltransferase (283 aa).

Positions 2–237 (ELWYTDQHTK…GHWLFGFASK (236 aa)) constitute a PABS domain. Q31 contributes to the S-methyl-5'-thioadenosine binding site. Spermidine contacts are provided by H62 and D86. S-methyl-5'-thioadenosine contacts are provided by residues E106 and 137-138 (EG). The active-site Proton acceptor is the D155. 155–158 (DCAD) is a spermidine binding site. P162 serves as a coordination point for S-methyl-5'-thioadenosine.

Belongs to the spermidine/spermine synthase family. In terms of assembly, homodimer or homotetramer.

The protein localises to the cytoplasm. It carries out the reaction S-adenosyl 3-(methylsulfanyl)propylamine + putrescine = S-methyl-5'-thioadenosine + spermidine + H(+). The protein operates within amine and polyamine biosynthesis; spermidine biosynthesis; spermidine from putrescine: step 1/1. Its function is as follows. Catalyzes the irreversible transfer of a propylamine group from the amino donor S-adenosylmethioninamine (decarboxy-AdoMet) to putrescine (1,4-diaminobutane) to yield spermidine. The polypeptide is Polyamine aminopropyltransferase (Lachnoclostridium phytofermentans (strain ATCC 700394 / DSM 18823 / ISDg) (Clostridium phytofermentans)).